The sequence spans 312 residues: Olfactory receptor 1D5 (312 aa).

Residues 1–25 (MDGDNQSENSQFLLLGISESPEQQQ) are Extracellular-facing. The N-linked (GlcNAc...) asparagine glycan is linked to N5. Residues 26–49 (ILFWMFLSMYLVTVLGNVLIILAI) traverse the membrane as a helical segment. Residues 50 to 57 (SSDSHLHT) lie on the Cytoplasmic side of the membrane. Residues 58–79 (PMYFFLANLSFTDLFFVTNTIP) form a helical membrane-spanning segment. The Extracellular segment spans residues 80 to 100 (KMLVNFQSQNKAISYAGCLTQ). A disulfide bond links C97 and C189. The helical transmembrane segment at 101–120 (LYFLVSLVTLDNLILAVMAY) threads the bilayer. Residues 121 to 140 (DRYVAICCPLHYVTAMSPGL) lie on the Cytoplasmic side of the membrane. Residues 141-158 (CVLLLSLCWGLSVLYGLL) traverse the membrane as a helical segment. Over 159 to 196 (LTLLLTRVTFCGPREIHYLFCDMYILLRLACSNTHIIH) the chain is Extracellular. Residues 197–220 (TVLVATGCFIFLTPLGFMTTSYVC) traverse the membrane as a helical segment. The Cytoplasmic portion of the chain corresponds to 221–237 (IVRTILQIPSASKKYKA). Residues 238–260 (FSTCASHLGVVSLFYGTLAMVYL) traverse the membrane as a helical segment. At 261–271 (QPLHTYSMKDS) the chain is on the extracellular side. Residues 272–291 (VATVMYAVVTPMMNPFIYSL) form a helical membrane-spanning segment. Over 292 to 312 (RNKDMHGALGRVLRRLFQRPK) the chain is Cytoplasmic.

The protein belongs to the G-protein coupled receptor 1 family.

Its subcellular location is the cell membrane. In terms of biological role, odorant receptor. This Pan paniscus (Pygmy chimpanzee) protein is Olfactory receptor 1D5 (OR1D5).